Reading from the N-terminus, the 176-residue chain is Transcription factor E (176 aa).

Residues 5-89 enclose the HTH TFE/IIEalpha-type domain; that stretch reads IDQLMKDMAR…YWKANVDQIN (85 aa).

The protein belongs to the TFE family. Monomer. Interaction with RNA polymerase subunits RpoF and RpoE is necessary for Tfe stimulatory transcription activity. Able to interact with Tbp and RNA polymerase in the absence of DNA promoter. Interacts both with the preinitiation and elongation complexes.

Its function is as follows. Transcription factor that plays a role in the activation of archaeal genes transcribed by RNA polymerase. Facilitates transcription initiation by enhancing TATA-box recognition by TATA-box-binding protein (Tbp), and transcription factor B (Tfb) and RNA polymerase recruitment. Not absolutely required for transcription in vitro, but particularly important in cases where Tbp or Tfb function is not optimal. It dynamically alters the nucleic acid-binding properties of RNA polymerases by stabilizing the initiation complex and destabilizing elongation complexes. Seems to translocate with the RNA polymerase following initiation and acts by binding to the non template strand of the transcription bubble in elongation complexes. This chain is Transcription factor E, found in Metallosphaera sedula (strain ATCC 51363 / DSM 5348 / JCM 9185 / NBRC 15509 / TH2).